An 84-amino-acid chain; its full sequence is UPF0473 protein CLD_2004 (84 aa).

It belongs to the UPF0473 family.

This chain is UPF0473 protein CLD_2004, found in Clostridium botulinum (strain Okra / Type B1).